Reading from the N-terminus, the 310-residue chain is MTFSALPFRRADRRRLLAAALAACALTLTAACDSGTVTVPVTDSVTTSAVADPRFAELETTSGARLGVFAVDTGSGRTVAHRADERFPMASTFKGLACGALLREHPLSTGYFDQVIHYSAAELVEYSPVTETRVETGMTVRELCDAAITVSDNTAGNQLLKLLGGPEGFTASLRSLGDATSRLDRWETDLNTAIPGDERDTTTPAALAADYRALVVGDVLGAPERDQLKAWLVANTTGATRIRAGLPADWTVGDKTGSPAYGSALDVAVAWPPGRAPIVIAVLSTKSEQDAEPDNALLAEATRVVVDALG.

An N-terminal signal peptide occupies residues 1 to 31 (MTFSALPFRRADRRRLLAAALAACALTLTAA). Cys32 carries the N-palmitoyl cysteine lipid modification. Cys32 carries the S-diacylglycerol cysteine lipid modification. Ser91 (acyl-ester intermediate) is an active-site residue. Substrate is bound at residue Ser151. Catalysis depends on Glu187, which acts as the Proton acceptor. Substrate is bound at residue 255–257 (KTG).

The protein belongs to the class-A beta-lactamase family.

The protein localises to the cell membrane. It catalyses the reaction a beta-lactam + H2O = a substituted beta-amino acid. Its activity is regulated as follows. Inhibited by clavulanic acid. Functionally, confers high levels of resistance to amoxicillin, benzylpenicillin, piperacillin, ticarcillin and cephalothin. Not active against ceftazidime, cefotaxime and aztreonam. This chain is Beta-lactamase AST-1 (bla), found in Nocardia asteroides.